We begin with the raw amino-acid sequence, 778 residues long: Exo-beta-D-glucosaminidase (778 aa).

Residues Y55, 104–105 (GE), 180–181 (DE), E308, E349, and Y381 each bind substrate. The Proton donor role is filled by E181. E349 (nucleophile) is an active-site residue.

It belongs to the glycosyl hydrolase 35 family. As to quaternary structure, homodimer.

It localises to the cytoplasm. It catalyses the reaction beta-D-glucosaminyl-(1-&gt;4)-N-acetyl-D-glucosamine + H2O = D-glucosamine + N-acetyl-D-glucosamine. It participates in glycan degradation; chitin degradation. In terms of biological role, exo-type enzyme that specifically cleaves the non-reducing terminal glycosidic bond of chitooligosaccharides. Catalyzes the hydrolysis of GlcN-GlcNAc to glucosamine (GlcN) and N-acetylglucosamine (GlcNAc). Involved in chitin degradation. Can also hydrolyze chitosan and chitooligosaccharides of various chain lengths. The polypeptide is Exo-beta-D-glucosaminidase (Pyrococcus horikoshii (strain ATCC 700860 / DSM 12428 / JCM 9974 / NBRC 100139 / OT-3)).